The following is an 817-amino-acid chain: Anaphase-promoting complex subunit 4 (817 aa).

At Tyr469 the chain carries Phosphotyrosine. Residues Ser757 and Ser758 each carry the phosphoserine modification. A Glycyl lysine isopeptide (Lys-Gly) (interchain with G-Cter in SUMO2) cross-link involves residue Lys772. Ser777 and Ser779 each carry phosphoserine. Lys798 participates in a covalent cross-link: Glycyl lysine isopeptide (Lys-Gly) (interchain with G-Cter in SUMO2).

Belongs to the APC4 family. In terms of assembly, the mammalian APC/C is composed at least of 14 distinct subunits ANAPC1, ANAPC2, CDC27/APC3, ANAPC4, ANAPC5, CDC16/APC6, ANAPC7, CDC23/APC8, ANAPC10, ANAPC11, CDC26/APC12, ANAPC13, ANAPC15 and ANAPC16 that assemble into a complex of at least 19 chains with a combined molecular mass of around 1.2 MDa; APC/C interacts with FZR1 and FBXO5. In the context of the APC/C complex, directly interacts with UBE2S.

It is found in the nucleus. Its pathway is protein modification; protein ubiquitination. In terms of biological role, component of the anaphase promoting complex/cyclosome (APC/C), a cell cycle-regulated E3 ubiquitin ligase that controls progression through mitosis and the G1 phase of the cell cycle. The APC/C complex acts by mediating ubiquitination and subsequent degradation of target proteins: it mainly mediates the formation of 'Lys-11'-linked polyubiquitin chains and, to a lower extent, the formation of 'Lys-48'- and 'Lys-63'-linked polyubiquitin chains. The APC/C complex catalyzes assembly of branched 'Lys-11'-/'Lys-48'-linked branched ubiquitin chains on target proteins. The sequence is that of Anaphase-promoting complex subunit 4 (ANAPC4) from Pongo abelii (Sumatran orangutan).